We begin with the raw amino-acid sequence, 502 residues long: Ribose import ATP-binding protein RbsA (502 aa).

2 consecutive ABC transporter domains span residues 6–242 (IDMT…IARD) and 253–496 (ALGA…SGAR). An ATP-binding site is contributed by 38-45 (GQNGAGKS).

It belongs to the ABC transporter superfamily. Ribose importer (TC 3.A.1.2.1) family. In terms of assembly, the complex is composed of an ATP-binding protein (RbsA), two transmembrane proteins (RbsC) and a solute-binding protein (RbsB).

The protein resides in the cell inner membrane. It catalyses the reaction D-ribose(out) + ATP + H2O = D-ribose(in) + ADP + phosphate + H(+). Part of the ABC transporter complex RbsABC involved in ribose import. Responsible for energy coupling to the transport system. This is Ribose import ATP-binding protein RbsA from Cereibacter sphaeroides (strain ATCC 17023 / DSM 158 / JCM 6121 / CCUG 31486 / LMG 2827 / NBRC 12203 / NCIMB 8253 / ATH 2.4.1.) (Rhodobacter sphaeroides).